Here is a 464-residue protein sequence, read N- to C-terminus: Multifunctional dye peroxidase DyP2 (464 aa).

Residue Asp203 is the Proton acceptor of the active site. Residues Glu258, Glu273, and Glu284 each coordinate Mn(2+). A heme-binding site is contributed by His321.

Belongs to the DyP-type peroxidase family. Exists both as a monomeric and oligomeric species in solution; the monomeric form contains no bound heme cofactor and is inactive. Heme b serves as cofactor. It depends on Mn(2+) as a cofactor.

The protein resides in the secreted. It carries out the reaction 1-(4-hydroxy-3-methoxyphenyl)-2-(2-methoxyphenoxy)propane-1,3-diol + H2O2 = guaiacol + vanillin + glycolaldehyde + H2O. The enzyme catalyses 2 Mn(2+) + H2O2 + 2 H(+) = 2 Mn(3+) + 2 H2O. It catalyses the reaction 2 a phenolic donor + H2O2 = 2 a phenolic radical donor + 2 H2O. The catalysed reaction is Reactive Blue 5 + 2 H2O2 = 2,2'-disulfonyl azobenzene + 3-[(4-amino-6-chloro-1,3,5-triazin-2-yl)amino]benzenesulfonate + phthalate + 2 H2O + 2 H(+). Functionally, displays both high peroxidase and manganese peroxidase activity. Is likely involved in lignin degradation. Also has a Mn-dependent oxidase mode of action that expands its substrate scope in vitro; is thus able to catalyze the O(2)- and Mn-dependent oxidative decarboxylation of 4-methoxymandelate to anisaldehyde. This is Multifunctional dye peroxidase DyP2 from Amycolatopsis sp. (strain ATCC 39116 / 75iv2).